The sequence spans 251 residues: Derlin-1 (251 aa).

S2 bears the N-acetylserine mark. Residues 2 to 15 lie on the Cytoplasmic side of the membrane; sequence SDIGDWFRSIPAIT. Residues 16–31 form a helical membrane-spanning segment; sequence RYWFAATVAVPLIGKL. The Lumenal portion of the chain corresponds to 32–69; sequence GIISPAYFFLWPEAFLYRFQIWRPFTATFYFPVGPGTG. A helical transmembrane segment spans residues 70–89; sequence FLYLVNLYFLYQYSTRLEAG. Residues 90-94 lie on the Cytoplasmic side of the membrane; it reads AFDGR. A helical membrane pass occupies residues 95–115; that stretch reads PADYLFMLLFNWICIVITGLA. Over 116 to 122 the chain is Lumenal; the sequence is MDMQLLM. A helical membrane pass occupies residues 123 to 137; that stretch reads IPLIMSVLYVWAQLN. Residues 138–154 are Cytoplasmic-facing; sequence RDLIVSFWFGTRFKACY. Residues 155–166 traverse the membrane as a helical segment; that stretch reads LPWVILGFNYII. Residues 167–170 lie on the Lumenal side of the membrane; that stretch reads GGSV. Residues 171–189 form a helical membrane-spanning segment; sequence INELIGNLVGHLYFFLMFR. Over 190-251 the chain is Cytoplasmic; sequence YPMDLGGRNF…WGQGFRLGDQ (62 aa). Position 201 is a phosphoserine (S201). The residue at position 202 (T202) is a Phosphothreonine. S226 is modified (phosphoserine). The interval 229-251 is disordered; it reads RAADQNGGGGRHNWGQGFRLGDQ. An SHP-box motif is present at residues 241–248; sequence NWGQGFRL.

The protein belongs to the derlin family. As to quaternary structure, homotetramer. The four subunits of the tetramer are arranged in a twofold symmetry. Forms homo- and heterooligomers with DERL2 and DERL3; binding to DERL3 is poorer than that between DERL2 and DERL3. Interacts (via SHP-box motif) with VCP. Interacts with AMFR, SELENOS, SEL1L, SELENOK and SYVN1, as well as with SEL1L-SYVN1 and VCP-SELENOS protein complexes; this interaction is weaker than that observed between DERL2 and these complexes. Interacts with NGLY1 and YOD1. Does not bind to EDEM1. Interacts with DNAJB9. Interacts with RNF103. Interacts with HM13. Interacts with XBP1 isoform 1 (via luminal/ectodomain domain); the interaction obviates the need for ectodomain shedding prior HM13/SPP-mediated XBP1 isoform 1 cleavage. Interacts with the signal recognition particle/SRP and the SRP receptor; in the process of endoplasmic reticulum stress-induced pre-emptive quality control. May interact with UBXN6. Interacts with ZFAND2B; probably through VCP. Interacts with CCDC47. Interacts with C18orf32. May interact with TRAM1. Forms a complex with SVIP and VCP/p97. Widely expressed, with lowest levels in brain and heart.

The protein localises to the endoplasmic reticulum membrane. In terms of biological role, functional component of endoplasmic reticulum-associated degradation (ERAD) for misfolded lumenal proteins. Forms homotetramers which encircle a large channel traversing the endoplasmic reticulum (ER) membrane. This allows the retrotranslocation of misfolded proteins from the ER into the cytosol where they are ubiquitinated and degraded by the proteasome. The channel has a lateral gate within the membrane which provides direct access to membrane proteins with no need to reenter the ER lumen first. May mediate the interaction between VCP and the misfolded protein. Also involved in endoplasmic reticulum stress-induced pre-emptive quality control, a mechanism that selectively attenuates the translocation of newly synthesized proteins into the endoplasmic reticulum and reroutes them to the cytosol for proteasomal degradation. By controlling the steady-state expression of the IGF1R receptor, indirectly regulates the insulin-like growth factor receptor signaling pathway. This Mus musculus (Mouse) protein is Derlin-1.